The chain runs to 422 residues: Protein IQ-DOMAIN 5 (422 aa).

A Nuclear localization signal motif is present at residues 23–30 (SKKDENVK). IQ domains follow at residues 87-115 (ENRA…GLVR), 116-138 (LQAL…CMQA), and 139-164 (LVRV…TSQQ). Positions 137–151 (QALVRVQARVRARRV) are calmodulin-binding. A disordered region spans residues 269–422 (GENGMEQSEN…NSDPIKQRLA (154 aa)). Residues 273–308 (MEQSENVPKTQIKSVSKMPNTSNLVSGVSSQMTGPC) show a composition bias toward polar residues. A compositionally biased stretch (low complexity) spans 310-327 (SDGDSSSPGISSSIPVVS). Positions 355-371 (NPKERSREPNRSSKERL) are enriched in basic and acidic residues. The segment covering 373-387 (LPNSGKSLGSQSTKA) has biased composition (polar residues). The segment covering 412-422 (RNSDPIKQRLA) has biased composition (basic and acidic residues).

The protein belongs to the IQD family. As to quaternary structure, binds to multiple calmodulin (CaM) in the presence of Ca(2+) and CaM-like proteins. Expressed mostly in vegetative tissues including older parts of the root, cotyledons, leaves and shoot apical meristems (SAM). Present at low levels in pollen, siliques and seeds.

Its subcellular location is the nucleus. The protein resides in the cytoplasm. The protein localises to the cytoskeleton. It is found in the spindle. It localises to the phragmoplast. In terms of biological role, may be involved in cooperative interactions with calmodulins or calmodulin-like proteins. Recruits calmodulin (CaM) calcium sensor proteins to cortical microtubule arrays, thus being a potential scaffold in cellular signaling and trafficking. Binds to microtubules (MTs) and promotes MT assembly and dynamics to modulate pavement cell (PC) morphogenesis via cellulose deposition-dependent anisotropic cell expansion triggered by cellulose synthase complexes (CSCs). May associate with nucleic acids and regulate gene expression at the transcriptional or post-transcriptional level. The protein is Protein IQ-DOMAIN 5 of Arabidopsis thaliana (Mouse-ear cress).